Here is a 67-residue protein sequence, read N- to C-terminus: NSVHPCCDPVKCEPREGEHCISGPCCRNCYFLRAGTVCKRAVGDDVDDYCSGITPDCPRNRYKGKED.

The region spanning 1 to 65 (NSVHPCCDPV…DCPRNRYKGK (65 aa)) is the Disintegrin domain. Intrachain disulfides connect Cys6-Cys29, Cys20-Cys26, Cys25-Cys50, and Cys38-Cys57. A Cell attachment site; atypical (VGD) motif is present at residues 42–44 (VGD).

Belongs to the venom metalloproteinase (M12B) family. P-II subfamily. P-IIe sub-subfamily. In terms of assembly, heterodimer with EC3B; disulfide-linked. As to expression, expressed by the venom gland.

The protein resides in the secreted. Inhibits adhesion of cells expressing alpha-4/beta-1 (ITGA4/ITGB1) and alpha-4/beta-7 (ITGA4/ITGB7) integrins to the natural ligands vascular cell adhesion molecule 1 (VCAM-1) and mucosal addressin cell adhesion molecule 1 (MADCAM-1). It is also a weaker inhibitor of alpha-5/beta-1 (ITGA5/ITGB1) and alpha-2b/beta-3 (ITGA2B/ITGB3) integrins. The inhibitory activity of EC3 towards alpha-4 integrins is associated with the MLD sequence of EC3B subunit. The ability of EC3 to inhibit ITGA5/ITGB1 resides in both subunits A and B. This Echis carinatus (Saw-scaled viper) protein is Disintegrin EC3A.